A 227-amino-acid polypeptide reads, in one-letter code: 2,3-bisphosphoglycerate-dependent phosphoglycerate mutase (227 aa).

Residues 8-15, 21-22, Arg58, 110-113, Lys121, 137-138, and 181-182 contribute to the substrate site; these read RHGKSVWN, TG, ERMY, RR, and GN. The active-site Tele-phosphohistidine intermediate is the His9. Glu110 functions as the Proton donor/acceptor in the catalytic mechanism.

Belongs to the phosphoglycerate mutase family. BPG-dependent PGAM subfamily.

It catalyses the reaction (2R)-2-phosphoglycerate = (2R)-3-phosphoglycerate. Its pathway is carbohydrate degradation; glycolysis; pyruvate from D-glyceraldehyde 3-phosphate: step 3/5. Functionally, catalyzes the interconversion of 2-phosphoglycerate and 3-phosphoglycerate. In Chlamydia felis (strain Fe/C-56) (Chlamydophila felis), this protein is 2,3-bisphosphoglycerate-dependent phosphoglycerate mutase.